Consider the following 1056-residue polypeptide: Kinesin-like protein KIN-5A (1056 aa).

Residues 1 to 44 are disordered; that stretch reads MDRRIGLTSPSPKSTEKSGRDLRSGGDANGGANTNSNSIPRGDK. Positions 14–24 are enriched in basic and acidic residues; it reads STEKSGRDLRS. Positions 49 to 395 constitute a Kinesin motor domain; sequence NVQVILRCRP…LDYAHRAKNI (347 aa). Residue 135 to 142 coordinates ATP; that stretch reads GQTGTGKT. The stretch at 443–525 forms a coiled coil; it reads QEEAEKKAMT…STIKEKEYVI (83 aa).

This sequence belongs to the TRAFAC class myosin-kinesin ATPase superfamily. Kinesin family. KIN-5/BimC subfamily.

The protein resides in the cytoplasm. Its subcellular location is the cytoskeleton. The protein localises to the spindle. In terms of biological role, responsible for microtubule translocation. May be important for the organization of phragmoplast-specific arrays of microtubules. Plays an essential role in stabilizing the mitotic spindle. Required during mitotic cytokinesis. This chain is Kinesin-like protein KIN-5A, found in Oryza sativa subsp. japonica (Rice).